The chain runs to 419 residues: MYEPTLTVESFDSELAGAIRDERRRQEHHVELIASENYVSPRVLELQGSVLTNKYAEGYPGRRYYGGCEFVDIAEQLAIDRAKELFVADYANVQPHSGSQANAEAYMALMNPGDTLLAMDLSHGGHLTHGSPVSFSGKFYKAVHYGLNAHGDIDYEQAAQLAQEHKPKVILAGFSAFSGIVDWQRFREIADSVNAYFMTDIAHVAGLVAAGVYPSPVQIADVTTTTTHKTLRGPRAGLILAKANPELEKRLNSAVFPGSQGGPLMHIIAAKAVAFKEAMQPEFKTYAQQILKNAKAMAEVMKERGYTIVSGGTQNHLFLVSLLDKNISGKEAEAALGRANITVNKNTVPGETRSPFVTSGLRIGTPAITTRGFKEKEASQLAHWVCDILDDIHNEKVIADVKQKAHELCGKFPVYQELD.

Residues L121 and G125–L127 contribute to the (6S)-5,6,7,8-tetrahydrofolate site. K229 is subject to N6-(pyridoxal phosphate)lysine. S354–F356 contributes to the (6S)-5,6,7,8-tetrahydrofolate binding site.

Belongs to the SHMT family. Homodimer. The cofactor is pyridoxal 5'-phosphate.

The protein resides in the cytoplasm. The enzyme catalyses (6R)-5,10-methylene-5,6,7,8-tetrahydrofolate + glycine + H2O = (6S)-5,6,7,8-tetrahydrofolate + L-serine. Its pathway is one-carbon metabolism; tetrahydrofolate interconversion. It functions in the pathway amino-acid biosynthesis; glycine biosynthesis; glycine from L-serine: step 1/1. In terms of biological role, catalyzes the reversible interconversion of serine and glycine with tetrahydrofolate (THF) serving as the one-carbon carrier. This reaction serves as the major source of one-carbon groups required for the biosynthesis of purines, thymidylate, methionine, and other important biomolecules. Also exhibits THF-independent aldolase activity toward beta-hydroxyamino acids, producing glycine and aldehydes, via a retro-aldol mechanism. This is Serine hydroxymethyltransferase from Coxiella burnetii (strain RSA 331 / Henzerling II).